The sequence spans 362 residues: 3-dehydroquinate synthase (362 aa).

NAD(+)-binding positions include 95–99 (GVVGD), 119–120 (TT), Lys-132, and Lys-141. 3 residues coordinate Zn(2+): Glu-174, His-238, and His-255.

This sequence belongs to the sugar phosphate cyclases superfamily. Dehydroquinate synthase family. Co(2+) serves as cofactor. It depends on Zn(2+) as a cofactor. NAD(+) is required as a cofactor.

It localises to the cytoplasm. It carries out the reaction 7-phospho-2-dehydro-3-deoxy-D-arabino-heptonate = 3-dehydroquinate + phosphate. It functions in the pathway metabolic intermediate biosynthesis; chorismate biosynthesis; chorismate from D-erythrose 4-phosphate and phosphoenolpyruvate: step 2/7. In terms of biological role, catalyzes the conversion of 3-deoxy-D-arabino-heptulosonate 7-phosphate (DAHP) to dehydroquinate (DHQ). In Chlorobium luteolum (strain DSM 273 / BCRC 81028 / 2530) (Pelodictyon luteolum), this protein is 3-dehydroquinate synthase.